The primary structure comprises 348 residues: Peroxidase 40 (348 aa).

An N-terminal signal peptide occupies residues 1–21 (MKNLFNLFLMFFFAMPILSLS). Residue N26 is glycosylated (N-linked (GlcNAc...) asparagine). Intrachain disulfides connect C59–C139, C92–C97, C145–C344, and C224–C256. H90 (proton acceptor) is an active-site residue. Ca(2+)-binding residues include D91, V94, G96, D98, and S100. The tract at residues 170–189 (GRKDSRTASKQAATNGLPSP) is disordered. Over residues 177-189 (ASKQAATNGLPSP) the composition is skewed to polar residues. P187 provides a ligand contact to substrate. N-linked (GlcNAc...) asparagine glycosylation is present at N190. Position 217 (H217) interacts with heme b. T218 is a binding site for Ca(2+). The Ca(2+) site is built by D269, T272, and D277.

Belongs to the peroxidase family. Classical plant (class III) peroxidase subfamily. Heme b serves as cofactor. Requires Ca(2+) as cofactor.

It localises to the secreted. It catalyses the reaction 2 a phenolic donor + H2O2 = 2 a phenolic radical donor + 2 H2O. Its function is as follows. Removal of H(2)O(2), oxidation of toxic reductants, biosynthesis and degradation of lignin, suberization, auxin catabolism, response to environmental stresses such as wounding, pathogen attack and oxidative stress. These functions might be dependent on each isozyme/isoform in each plant tissue. The sequence is that of Peroxidase 40 (PER40) from Arabidopsis thaliana (Mouse-ear cress).